The chain runs to 389 residues: Putative F-box/kelch-repeat protein At4g35120 (389 aa).

Residues serine 24–arginine 70 form the F-box domain. Kelch repeat units follow at residues glutamate 128–glycine 174, isoleucine 176–glycine 225, and arginine 227–isoleucine 273.

In Arabidopsis thaliana (Mouse-ear cress), this protein is Putative F-box/kelch-repeat protein At4g35120.